A 354-amino-acid polypeptide reads, in one-letter code: Serum paraoxonase/arylesterase 2 (354 aa).

A disulfide bridge links Cys42 with Cys352. Positions 53 and 54 each coordinate Ca(2+). Residue His114 is the Proton acceptor of the active site. Ile116, Asn167, Asp168, and Asn223 together coordinate Ca(2+). An N-linked (GlcNAc...) asparagine glycan is attached at Asn254. Residues Asp268 and Asn269 each contribute to the Ca(2+) site. N-linked (GlcNAc...) asparagine glycans are attached at residues Asn269 and Asn323.

This sequence belongs to the paraoxonase family. Homotrimer. The cofactor is Ca(2+). In terms of processing, glycosylated. Post-translationally, the signal sequence is not cleaved.

It localises to the membrane. The enzyme catalyses a phenyl acetate + H2O = a phenol + acetate + H(+). The catalysed reaction is an N-acyl-L-homoserine lactone + H2O = an N-acyl-L-homoserine + H(+). Capable of hydrolyzing lactones and a number of aromatic carboxylic acid esters. This is Serum paraoxonase/arylesterase 2 (PON2) from Canis lupus familiaris (Dog).